The following is a 204-amino-acid chain: Thiamine-phosphate synthase (204 aa).

4-amino-2-methyl-5-(diphosphooxymethyl)pyrimidine-binding positions include 35 to 39 and Asn-67; that span reads QVREK. Residues Asp-68 and Asp-87 each coordinate Mg(2+). A 4-amino-2-methyl-5-(diphosphooxymethyl)pyrimidine-binding site is contributed by Ser-106. 132-134 contacts 2-[(2R,5Z)-2-carboxy-4-methylthiazol-5(2H)-ylidene]ethyl phosphate; it reads TPT. Lys-135 contributes to the 4-amino-2-methyl-5-(diphosphooxymethyl)pyrimidine binding site. 2-[(2R,5Z)-2-carboxy-4-methylthiazol-5(2H)-ylidene]ethyl phosphate contacts are provided by residues Gly-163 and 183–184; that span reads VS.

It belongs to the thiamine-phosphate synthase family. Requires Mg(2+) as cofactor.

It catalyses the reaction 2-[(2R,5Z)-2-carboxy-4-methylthiazol-5(2H)-ylidene]ethyl phosphate + 4-amino-2-methyl-5-(diphosphooxymethyl)pyrimidine + 2 H(+) = thiamine phosphate + CO2 + diphosphate. It carries out the reaction 2-(2-carboxy-4-methylthiazol-5-yl)ethyl phosphate + 4-amino-2-methyl-5-(diphosphooxymethyl)pyrimidine + 2 H(+) = thiamine phosphate + CO2 + diphosphate. The catalysed reaction is 4-methyl-5-(2-phosphooxyethyl)-thiazole + 4-amino-2-methyl-5-(diphosphooxymethyl)pyrimidine + H(+) = thiamine phosphate + diphosphate. It participates in cofactor biosynthesis; thiamine diphosphate biosynthesis; thiamine phosphate from 4-amino-2-methyl-5-diphosphomethylpyrimidine and 4-methyl-5-(2-phosphoethyl)-thiazole: step 1/1. Functionally, condenses 4-methyl-5-(beta-hydroxyethyl)thiazole monophosphate (THZ-P) and 2-methyl-4-amino-5-hydroxymethyl pyrimidine pyrophosphate (HMP-PP) to form thiamine monophosphate (TMP). The sequence is that of Thiamine-phosphate synthase from Vibrio campbellii (strain ATCC BAA-1116).